A 252-amino-acid chain; its full sequence is dITP/XTP pyrophosphatase (252 aa).

7 to 12 is a substrate binding site; that stretch reads THNEGK. The active-site Proton acceptor is Asp74. Asp74 serves as a coordination point for Mg(2+). Residues Ser75 and 193–196 contribute to the substrate site; that span reads FGYD. Residues 202–229 are disordered; that stretch reads DDQPAGRVSTEPDHEGEPLTSAEMTPAE. Residues Lys230 and 235-236 each bind substrate; that span reads HR.

The protein belongs to the HAM1 NTPase family. Homodimer. The cofactor is Mg(2+).

The catalysed reaction is XTP + H2O = XMP + diphosphate + H(+). The enzyme catalyses dITP + H2O = dIMP + diphosphate + H(+). It carries out the reaction ITP + H2O = IMP + diphosphate + H(+). Functionally, pyrophosphatase that catalyzes the hydrolysis of nucleoside triphosphates to their monophosphate derivatives, with a high preference for the non-canonical purine nucleotides XTP (xanthosine triphosphate), dITP (deoxyinosine triphosphate) and ITP. Seems to function as a house-cleaning enzyme that removes non-canonical purine nucleotides from the nucleotide pool, thus preventing their incorporation into DNA/RNA and avoiding chromosomal lesions. This is dITP/XTP pyrophosphatase from Bifidobacterium longum (strain DJO10A).